A 3411-amino-acid chain; its full sequence is MSGRKAQGKTLGVNMVRRGVRSLSNKIKQKTKQIGNRPGPSRGVQGFIFFFLFNILTGKKITAHLKRLWKMLDPRQGLAALRKVKRVVAGLMRGLSSRKRRSHDVLTVQFLILGMLLMTGGVTLVRKNRWLLLNVTSEDLGKTFSMGTGNCTTNILEAKYWCPDSMEYNCPNLSPREEPDDIDCWCYGVENVRVAYGKCDSAGRSRRSRRAIDLPTHENHGLKTRQEKWMTGRMGERQLQKIERWFVRNPFFAVTALTIAYLVGSNMTQRVVIALLVLAVGPAYSAHCIGITDRDFIEGVHGGTWVSATLEQDKCVTVMAPDKPSLDISLETVAIDGPVEARKVCYNAVLTHVKINDKCPSTGEAHLAEENEGDNACKRTYSDRGWGNGCGLFGKGSIVACAKFTCAKSMSLFEVDQTKIQYVIRARLHVGAKQENWKTDIKTLKFDALSGSQEAEFTGYGKATLECQVQTAVDFGNSYIAEMEKESWIVDRQWAQDLTLPWQSGSGGVWREMHHLVEFEPPHAATIRVLALGDQEGSLKTALTGAMRVTKDTNDNNLYKLHGGHVSCRVKLSALTLKGTSYKMCTDKMSFVKNPTDTGHGTVVMQVKVPKGAPCRIPVIVADDLTAAINKGILVTVNPIASTNDDEVLIEVNPPFGDSYIIVGTGDSRLTYQWHKEGSSIGKLFTQTMKGAERLAVMGDAAWDFSSAGGFFTSVGKGIHTVFGSAFQGLFGGLNWITKVIIGAVLIWVGINTRNMTMSMSMILVGVIMMFLSLGVGADQGCAINFAKRELKCGDGIFIFRDSDDWLNKYSYYPEDPVKLASIVKASFEEGKCGLNSVDSLEHEMWRSRADEINAILEENEVDISVVVQDPKNVYQRGTHPFSRIRDGLQYGWKTWGKNLVFSPGRKNGSFIIDGKSRKECPFSNRVWNSFQIEEFGTGVFTTRVYMDAVFEYTIDCDGSILGAAVNGKKSAHGSPTFWMGSHEVNGTWMIHTLEALDYKECEWPLTHTIGTSVEESEMFMPRSIGGPVSSHNHIPGYKVQTNGPWMQVPLEVKREACPGTSVIIDGNCDGRGKSARSTTDSGKIIPEWCCRSCTMPPVSFHGSDGCWYPMEIRPRKTHESHLVRSWVTAGEIHAVPFGLVSMMIALEVVLRKRQGPKQMLVGGVVLLGAMLVGQVTLLDLLKLTVAVGLHFHEMNNGGDAMYMALIAAFSVRPGLLIGFGLRTLWSPRERLVLALGAAMVEIALGGMMGGLWKYLNAVSLCILTINAVASRKASNTILPLMALLTPVTMAEVRLATMLFCTVVIIGVLYQNSKDTSMQKTIPLVALTLTSYLGLTQPFLGLCAFLATRIFGRRSIPVNEALAAAGLVGVLAGLAFQEMENFLGPIAVGGILMMLVSVAGRVDGLELKKLGEVAWEEEAEISGSSARYDVALSEQGEFKLLSEEKVPWDQVVMTSLALVGAAIHPFALLLVLAGWLFHVRGARRSGDVLWDIPTPKVIEECEHLEDGIYGIFQSTFLGASQRGVGVAQGGVFHTMWHVTRGAFLVRNGKKLIPSWASVKEDLVAYGGSWKLEGRWDGEEEVQLIAAVPGKNVVNVQTKPSLFKVRNGGEIGAVALDYPSGTSGSPIVNRNGEVIGLYGNGILVGDNSFVSAISQTEVKEEGKEELQEIPTMLKKGKTTILDFHPGAGKTRRFLPQILAECARRRLRTLVLAPTRVVLSEMKEAFHGLDVKFHTQAFSAHGSGREVIDAMCHATLTYRMLEPTRIVNWEVIIMDEAHFLDPASIAARGWAAHRARANESATILMTATPPGTSDEFPHSNGEIEDVQTDIPSEPWNTGHDWILADKRPTAWFLPSIRAANVMAASLRKAGKSVVVLNRKTFEREYPTIKQKKPDFILATDIAEMGANLCVERVLDCRTAFKPVLVDEGRKVAIKGPLRISASSAAQRRGRIGRNPNRDGDSYYYSEPTSEDNAHHVCWLEASMLLDNMEVRGGMVAPLYGVEGTKTPVSPGEMRLRDDQRKVFRELVRNCDLPVWLSWQVAKAGLKTNDRKWCFEGPEEHEILNDSGETVKCRTPGGAKKPLRPRWCDERVSSDQSALSEFIKFAEGRRGAAEVLVVLSELPDFLAKKGGEAMDTISVLLHSEEGSRAYRNALSMMPEAMTIVMLFILAGLLTSGMVIFFMSPKGISRMSMAMGTMAGCGYLMFLGGVKPTHISYIMLIFFVLMVVVIPEPGQQRSIQDNQVAFLIIGILTLVSVVAANELGMLEKTKEDLFGKKNSIPSSASPWSWPDLDLKPGAAWTVYVGIVTMLSPMLHHWIKVEYGNLSLSGIAQSASVLSFMDKGIPFMKMNISVIMLLISGWNSITVMPLLCGIGCAMLHWSLILPGIKAQQSKLAQRRVFHGVAKNPVVDGNPTVDIEEAPEMPVLYEKKLALYLLLALSLASVAMCRTPFSLAEGIVLASAALGPLIEGNTSLLWNGPMAVSMTGVMRGNYYAFVGVMYNLWKMKTGRRGTANGKTLGEVWKRELNLLDKQQFELYKRTDIVEVDRDTARRHLAEGKVDTGVAVSRGTAKLRWFHERGYVKLEGRVIDLGCGRGGWCYYAAAQKEVSGVKGFTLGRDGHEKPMNVQSLGWNIITFKDKTDIHRLEPVKCDTLLCDIGESSSSSVTEGERTVRVLDTVEKWLACGVDNFCVKVLAPYMPDVLEKLELLQRRFGGTVIRNPLSRNSTHEMYYVSGARSNVTFTVNQTSRLLMRRMRRPTGKVTLEADVTLPIGTRSVETDKGPLDKEAIEERVERIKSEYMTSWFYDNDNPYRTWHYCGSYVTKTSGSAASMVNGVIKILTYPWDKIEEVTRMAMTDTTPFGQQRVFKEKVDTRAKDPPAGTRKIMKVVNRWLFRHLAREKNPRLCTKEEFIAKVRSHAAIGAYLEEQEQWKTANEAVQDPKFWELVDEERKLHQQGRCRTCVYNMMGKREKKLSEFGKAKGSRAIWYMWLGARYLEFEALGFLNEDHWASRENSGGGVEGIGLQYLGYVIRDLAAMDGGGFYADDTAGWDTRITEADLDDEQEILNYMSPHHKKLAQAVMEMTYKNKVVKVLRPAPGGKAYMDVISRRDQRGSGQVVTYALNTITNLKVQLIRMAEAEMVIHHQHVQDCDESVLTRLEAWLTEHGCNRLRRMAVSGDDCVVRPIDDRFGLALSHLNAMSKVRKDISEWQPSKGWNDWENVPFCSHHFHELQLKDGRRIVVPCREQDELIGRGRVSPGNGWMIKETACLSKAYANMWSLMYFHKRDMRLLSLAVSSAVPTSWVPQGRTTWSIHGKGEWMTTEDMLEVWNRVWITNNPHMQDKTMVKEWRDVPYLTKRQDKLCGSLIGMTNRATWASHIHLVIHRIRTLVGQEKYTDYLTVMDRYSVDADLQPGELI.

Over 1–104 the chain is Cytoplasmic; that stretch reads MSGRKAQGKT…LSSRKRRSHD (104 aa). Residues 38–72 form a hydrophobic; homodimerization of capsid protein C region; the sequence is PGPSRGVQGFIFFFLFNILTGKKITAHLKRLWKML. Residues 102–121 constitute a propeptide, ER anchor for the capsid protein C, removed in mature form by serine protease NS3; that stretch reads SHDVLTVQFLILGMLLMTGG. Residues 105 to 125 traverse the membrane as a helical segment; that stretch reads VLTVQFLILGMLLMTGGVTLV. At 126–244 the chain is on the extracellular side; the sequence is RKNRWLLLNV…GERQLQKIER (119 aa). Residues asparagine 134 and asparagine 150 are each glycosylated (N-linked (GlcNAc...) asparagine; by host). A helical membrane pass occupies residues 245 to 265; that stretch reads WFVRNPFFAVTALTIAYLVGS. Topologically, residues 266–270 are cytoplasmic; sequence NMTQR. A helical membrane pass occupies residues 271 to 285; sequence VVIALLVLAVGPAYS. At 286 to 730 the chain is on the extracellular side; that stretch reads AHCIGITDRD…TVFGSAFQGL (445 aa). Cystine bridges form between cysteine 288-cysteine 315, cysteine 345-cysteine 401, cysteine 345-cysteine 406, cysteine 359-cysteine 390, cysteine 377-cysteine 401, cysteine 377-cysteine 406, cysteine 467-cysteine 568, and cysteine 585-cysteine 615. The tract at residues 383–396 is fusion peptide; the sequence is DRGWGNGCGLFGKG. The chain crosses the membrane as a helical span at residues 731–751; sequence FGGLNWITKVIIGAVLIWVGI. Topologically, residues 752 to 757 are extracellular; the sequence is NTRNMT. The chain crosses the membrane as a helical span at residues 758–778; the sequence is MSMSMILVGVIMMFLSLGVGA. Topologically, residues 779-1132 are extracellular; the sequence is DQGCAINFAK…LVRSWVTAGE (354 aa). Cystine bridges form between cysteine 782-cysteine 793, cysteine 833-cysteine 921, cysteine 957-cysteine 1002, cysteine 1058-cysteine 1107, cysteine 1069-cysteine 1091, and cysteine 1090-cysteine 1094. N-linked (GlcNAc...) asparagine; by host glycans are attached at residues asparagine 908 and asparagine 986. The helical transmembrane segment at 1133–1153 threads the bilayer; the sequence is IHAVPFGLVSMMIALEVVLRK. Residues 1154–1201 are Cytoplasmic-facing; it reads RQGPKQMLVGGVVLLGAMLVGQVTLLDLLKLTVAVGLHFHEMNNGGDA. The helical transmembrane segment at 1202–1222 threads the bilayer; that stretch reads MYMALIAAFSVRPGLLIGFGL. Over 1223–1287 the chain is Lumenal; sequence RTLWSPRERL…ILPLMALLTP (65 aa). Residues 1288–1308 form a helical membrane-spanning segment; the sequence is VTMAEVRLATMLFCTVVIIGV. At 1309–1355 the chain is on the cytoplasmic side; it reads LYQNSKDTSMQKTIPLVALTLTSYLGLTQPFLGLCAFLATRIFGRRS. Residues 1356–1376 traverse the membrane as a helical segment; the sequence is IPVNEALAAAGLVGVLAGLAF. Residues 1377–1378 lie on the Lumenal side of the membrane; it reads QE. The helical transmembrane segment at 1379-1399 threads the bilayer; sequence MENFLGPIAVGGILMMLVSVA. Residues 1400–1456 are Cytoplasmic-facing; the sequence is GRVDGLELKKLGEVAWEEEAEISGSSARYDVALSEQGEFKLLSEEKVPWDQVVMTSL. The segment at 1407 to 1446 is interacts with and activates NS3 protease; that stretch reads LKKLGEVAWEEEAEISGSSARYDVALSEQGEFKLLSEEKV. The segment at residues 1457–1477 is an intramembrane region (helical); that stretch reads ALVGAAIHPFALLLVLAGWLF. Topologically, residues 1478–2157 are cytoplasmic; that stretch reads HVRGARRSGD…RNALSMMPEA (680 aa). The region spanning 1485 to 1665 is the Peptidase S7 domain; that stretch reads SGDVLWDIPT…EVKEEGKEEL (181 aa). Catalysis depends on charge relay system; for serine protease NS3 activity residues histidine 1537, aspartate 1561, and serine 1622. In terms of domain architecture, Helicase ATP-binding spans 1669–1825; that stretch reads PTMLKKGKTT…HSNGEIEDVQ (157 aa). The tract at residues 1673-1676 is important for RNA-binding; that stretch reads KKGK. 1682–1689 serves as a coordination point for ATP; that stretch reads FHPGAGKT. The short motif at 1773 to 1776 is the DEAH box element; it reads DEAH. Residues 1820–1997 enclose the Helicase C-terminal domain; sequence EIEDVQTDIP…VRGGMVAPLY (178 aa). Lysine 1877 carries the post-translational modification N6-acetyllysine; by host. Residues 1942-1961 form a disordered region; that stretch reads AAQRRGRIGRNPNRDGDSYY. The chain crosses the membrane as a helical span at residues 2158 to 2178; that stretch reads MTIVMLFILAGLLTSGMVIFF. The Lumenal portion of the chain corresponds to 2179–2186; that stretch reads MSPKGISR. An intramembrane region (helical) is located at residues 2187–2207; that stretch reads MSMAMGTMAGCGYLMFLGGVK. Over 2208–2209 the chain is Lumenal; sequence PT. The chain crosses the membrane as a helical span at residues 2210-2230; that stretch reads HISYIMLIFFVLMVVVIPEPG. Residues 2231–2241 lie on the Cytoplasmic side of the membrane; that stretch reads QQRSIQDNQVA. The helical transmembrane segment at 2242 to 2262 threads the bilayer; it reads FLIIGILTLVSVVAANELGML. Residues 2263–2293 lie on the Lumenal side of the membrane; that stretch reads EKTKEDLFGKKNSIPSSASPWSWPDLDLKPG. Residues 2294 to 2314 constitute an intramembrane region (helical); sequence AAWTVYVGIVTMLSPMLHHWI. Topologically, residues 2315 to 2360 are lumenal; it reads KVEYGNLSLSGIAQSASVLSFMDKGIPFMKMNISVIMLLISGWNSI. Residues 2361-2380 traverse the membrane as a helical segment; it reads TVMPLLCGIGCAMLHWSLIL. The Cytoplasmic portion of the chain corresponds to 2381-2421; the sequence is PGIKAQQSKLAQRRVFHGVAKNPVVDGNPTVDIEEAPEMPV. A helical membrane pass occupies residues 2422–2442; that stretch reads LYEKKLALYLLLALSLASVAM. Over 2443-2445 the chain is Lumenal; it reads CRT. The chain crosses the membrane as a helical span at residues 2446-2466; it reads PFSLAEGIVLASAALGPLIEG. Over 2467-3411 the chain is Cytoplasmic; sequence NTSLLWNGPM…DADLQPGELI (945 aa). One can recognise an mRNA cap 0-1 NS5-type MT domain in the interval 2507-2771; the sequence is GTANGKTLGE…DVTLPIGTRS (265 aa). Residue serine 2562 coordinates S-adenosyl-L-methionine. Phosphoserine is present on serine 2562. Lysine 2567 serves as the catalytic For 2'-O-MTase activity. S-adenosyl-L-methionine contacts are provided by glycine 2592, tryptophan 2593, threonine 2610, leucine 2611, aspartate 2637, and isoleucine 2638. The active-site For 2'-O-MTase activity is aspartate 2652. Residue isoleucine 2653 coordinates S-adenosyl-L-methionine. Active-site for 2'-O-MTase activity residues include lysine 2688 and glutamate 2724. Tyrosine 2726 contacts S-adenosyl-L-methionine. The Nuclear localization signal signature appears at 2878-2911; sequence RKIMKVVNRWLFRHLAREKNPRLCTKEEFIAKVR. 4 residues coordinate Zn(2+): glutamate 2945, histidine 2949, cysteine 2954, and cysteine 2957. Residues 3035-3187 enclose the RdRp catalytic domain; the sequence is GGFYADDTAG…RPIDDRFGLA (153 aa). Residues histidine 3222, cysteine 3238, and cysteine 3357 each coordinate Zn(2+).

It in the N-terminal section; belongs to the class I-like SAM-binding methyltransferase superfamily. mRNA cap 0-1 NS5-type methyltransferase family. Homodimer. Interacts (via N-terminus) with host EXOC1 (via C-terminus); this interaction results in EXOC1 degradation through the proteasome degradation pathway. As to quaternary structure, forms heterodimers with envelope protein E in the endoplasmic reticulum and Golgi. In terms of assembly, homodimer; in the endoplasmic reticulum and Golgi. Interacts with protein prM. Interacts with non-structural protein 1. Homodimer; Homohexamer when secreted. Interacts with envelope protein E. As to quaternary structure, interacts (via N-terminus) with serine protease NS3. In terms of assembly, forms a heterodimer with serine protease NS3. May form homooligomers. Forms a heterodimer with NS2B. Interacts with non-structural protein 2A (via N-terminus). Interacts with NS4B. Interacts with unphosphorylated RNA-directed RNA polymerase NS5; this interaction stimulates RNA-directed RNA polymerase NS5 guanylyltransferase activity. NS3 interacts with host PDCD6IP; this interaction contributes to virion release. As to quaternary structure, interacts with serine protease NS3. In terms of assembly, homodimer. Interacts with host STAT2; this interaction prevents the establishment of cellular antiviral state. Interacts with serine protease NS3. Interacts with host TRIM23; this interaction leads to NS5 ubiquitination. In terms of processing, specific enzymatic cleavages in vivo yield mature proteins. The nascent capsid protein C contains a C-terminal hydrophobic domain that act as a signal sequence for translocation of prM into the lumen of the ER. Mature capsid protein C is cleaved at a site upstream of this hydrophobic domain by NS3. prM is cleaved in post-Golgi vesicles by a host furin, releasing the mature small envelope protein M, and peptide pr. Non-structural protein 2A-alpha, a C-terminally truncated form of non-structural protein 2A, results from partial cleavage by NS3. Specific enzymatic cleavages in vivo yield mature proteins peptide 2K acts as a signal sequence and is removed from the N-terminus of NS4B by the host signal peptidase in the ER lumen. Signal cleavage at the 2K-4B site requires a prior NS3 protease-mediated cleavage at the 4A-2K site. Cleaved in post-Golgi vesicles by a host furin, releasing the mature small envelope protein M, and peptide pr. This cleavage is incomplete as up to 30% of viral particles still carry uncleaved prM. Post-translationally, N-glycosylated. In terms of processing, N-glycosylated. The excreted form is glycosylated and this is required for efficient secretion of the protein from infected cells. Polyubiquitinated; ubiquitination is probably mediated by host TRIM23 and is prerequisite for NS5-STAT2 interaction. NS5 is not ISGylated or sumoylated. Post-translationally, phosphorylated on serines residues. This phosphorylation may trigger NS5 nuclear localization. In terms of processing, acetylated by host KAT5. Acetylation modulates NS3 RNA-binding and -unwinding activities and plays an important role for viral replication.

Its subcellular location is the virion. It is found in the host nucleus. The protein localises to the host cytoplasm. It localises to the host perinuclear region. The protein resides in the secreted. Its subcellular location is the virion membrane. It is found in the host endoplasmic reticulum membrane. The catalysed reaction is Selective hydrolysis of -Xaa-Xaa-|-Yaa- bonds in which each of the Xaa can be either Arg or Lys and Yaa can be either Ser or Ala.. The enzyme catalyses RNA(n) + a ribonucleoside 5'-triphosphate = RNA(n+1) + diphosphate. It catalyses the reaction a ribonucleoside 5'-triphosphate + H2O = a ribonucleoside 5'-diphosphate + phosphate + H(+). It carries out the reaction ATP + H2O = ADP + phosphate + H(+). The catalysed reaction is a 5'-end (5'-triphosphoguanosine)-ribonucleoside in mRNA + S-adenosyl-L-methionine = a 5'-end (N(7)-methyl 5'-triphosphoguanosine)-ribonucleoside in mRNA + S-adenosyl-L-homocysteine. The enzyme catalyses a 5'-end (N(7)-methyl 5'-triphosphoguanosine)-ribonucleoside in mRNA + S-adenosyl-L-methionine = a 5'-end (N(7)-methyl 5'-triphosphoguanosine)-(2'-O-methyl-ribonucleoside) in mRNA + S-adenosyl-L-homocysteine + H(+). In terms of biological role, plays a role in virus budding by binding to the cell membrane and gathering the viral RNA into a nucleocapsid that forms the core of a mature virus particle. During virus entry, may induce genome penetration into the host cytoplasm after hemifusion induced by the surface proteins. Can migrate to the cell nucleus where it modulates host functions. Its function is as follows. Inhibits RNA silencing by interfering with host Dicer. Functionally, prevents premature fusion activity of envelope proteins in trans-Golgi by binding to envelope protein E at pH6.0. After virion release in extracellular space, gets dissociated from E dimers. Acts as a chaperone for envelope protein E during intracellular virion assembly by masking and inactivating envelope protein E fusion peptide. prM is the only viral peptide matured by host furin in the trans-Golgi network probably to avoid catastrophic activation of the viral fusion activity in acidic Golgi compartment prior to virion release. prM-E cleavage is inefficient, and many virions are only partially matured. These uncleaved prM would play a role in immune evasion. In terms of biological role, may play a role in virus budding. Exerts cytotoxic effects by activating a mitochondrial apoptotic pathway through M ectodomain. May display a viroporin activity. Its function is as follows. Binds to host cell surface receptor and mediates fusion between viral and cellular membranes. Envelope protein is synthesized in the endoplasmic reticulum in the form of heterodimer with protein prM. They play a role in virion budding in the ER, and the newly formed immature particle is covered with 60 spikes composed of heterodimer between precursor prM and envelope protein E. The virion is transported to the Golgi apparatus where the low pH causes dissociation of PrM-E heterodimers and formation of E homodimers. prM-E cleavage is inefficient, and many virions are only partially matured. These uncleaved prM would play a role in immune evasion. Functionally, involved in immune evasion, pathogenesis and viral replication. Once cleaved off the polyprotein, is targeted to three destinations: the viral replication cycle, the plasma membrane and the extracellular compartment. Essential for viral replication. Required for formation of the replication complex and recruitment of other non-structural proteins to the ER-derived membrane structures. Excreted as a hexameric lipoparticle that plays a role against host immune response. Antagonizing the complement function. Binds to the host macrophages and dendritic cells. Inhibits signal transduction originating from Toll-like receptor 3 (TLR3). Component of the viral RNA replication complex that functions in virion assembly and antagonizes the host immune response. In terms of biological role, required cofactor for the serine protease function of NS3. May have membrane-destabilizing activity and form viroporins. Its function is as follows. Displays three enzymatic activities: serine protease, NTPase and RNA helicase. NS3 serine protease, in association with NS2B, performs its autocleavage and cleaves the polyprotein at dibasic sites in the cytoplasm: C-prM, NS2A-NS2B, NS2B-NS3, NS3-NS4A, NS4A-2K and NS4B-NS5. NS3 RNA helicase binds RNA and unwinds dsRNA in the 3' to 5' direction. Also plays a role in virus assembly. Functionally, regulates the ATPase activity of the NS3 helicase activity. NS4A allows NS3 helicase to conserve energy during unwinding. Functions as a signal peptide for NS4B and is required for the interferon antagonism activity of the latter. In terms of biological role, induces the formation of ER-derived membrane vesicles where the viral replication takes place. Inhibits interferon (IFN)-induced host STAT1 phosphorylation and nuclear translocation, thereby preventing the establishment of cellular antiviral state by blocking the IFN-alpha/beta pathway. Its function is as follows. Replicates the viral (+) and (-) RNA genome, and performs the capping of genomes in the cytoplasm. NS5 methylates viral RNA cap at guanine N-7 and ribose 2'-O positions. Besides its role in RNA genome replication, also prevents the establishment of cellular antiviral state by blocking the interferon-alpha/beta (IFN-alpha/beta) signaling pathway. IFN-I induces binding of NS5 to host IFN-activated transcription factor STAT2, preventing its transcriptional activity. Host TRIM23 is the E3 ligase that interacts with and polyubiquitinates NS5 to promote its binding to STAT2 and trigger IFN-I signaling inhibition. In Yellow fever virus (strain French neurotropic vaccine FNV) (YFV), this protein is Genome polyprotein.